The primary structure comprises 309 residues: Ornithine carbamoyltransferase (309 aa).

Residues 57–60 (STRT), Q84, R108, and 135–138 (HPCQ) contribute to the carbamoyl phosphate site. L-ornithine is bound by residues N166, D224, and 228–229 (SM). Carbamoyl phosphate-binding positions include 264–265 (CL) and R292.

It belongs to the aspartate/ornithine carbamoyltransferase superfamily. OTCase family.

It localises to the cytoplasm. It carries out the reaction carbamoyl phosphate + L-ornithine = L-citrulline + phosphate + H(+). The protein operates within amino-acid biosynthesis; L-arginine biosynthesis; L-arginine from L-ornithine and carbamoyl phosphate: step 1/3. In terms of biological role, reversibly catalyzes the transfer of the carbamoyl group from carbamoyl phosphate (CP) to the N(epsilon) atom of ornithine (ORN) to produce L-citrulline. This Paracidovorax citrulli (strain AAC00-1) (Acidovorax citrulli) protein is Ornithine carbamoyltransferase.